A 31-amino-acid chain; its full sequence is Photosystem II reaction center protein T (31 aa).

A helical membrane pass occupies residues 3–23; sequence ALVYTFLLVGTLGIIFFAIFF.

It belongs to the PsbT family. As to quaternary structure, PSII is composed of 1 copy each of membrane proteins PsbA, PsbB, PsbC, PsbD, PsbE, PsbF, PsbH, PsbI, PsbJ, PsbK, PsbL, PsbM, PsbT, PsbY, PsbZ, Psb30/Ycf12, at least 3 peripheral proteins of the oxygen-evolving complex and a large number of cofactors. It forms dimeric complexes.

The protein localises to the plastid. Its subcellular location is the chloroplast thylakoid membrane. Found at the monomer-monomer interface of the photosystem II (PS II) dimer, plays a role in assembly and dimerization of PSII. PSII is a light-driven water plastoquinone oxidoreductase, using light energy to abstract electrons from H(2)O, generating a proton gradient subsequently used for ATP formation. The sequence is that of Photosystem II reaction center protein T from Chlorella vulgaris (Green alga).